A 111-amino-acid polypeptide reads, in one-letter code: Large ribosomal subunit protein uL23 (111 aa).

This sequence belongs to the universal ribosomal protein uL23 family. As to quaternary structure, part of the 50S ribosomal subunit. Contacts protein L29, and trigger factor when it is bound to the ribosome.

In terms of biological role, one of the early assembly proteins it binds 23S rRNA. One of the proteins that surrounds the polypeptide exit tunnel on the outside of the ribosome. Forms the main docking site for trigger factor binding to the ribosome. The sequence is that of Large ribosomal subunit protein uL23 from Chlamydia trachomatis serovar A (strain ATCC VR-571B / DSM 19440 / HAR-13).